Reading from the N-terminus, the 182-residue chain is Isopentenyl-diphosphate Delta-isomerase (182 aa).

Positions 25 and 32 each coordinate Mn(2+). The region spanning 30 to 164 (LLHLAFSSWL…PWAFSPWMVM (135 aa)) is the Nudix hydrolase domain. C67 is an active-site residue. H69 contributes to the Mn(2+) binding site. Residue E87 participates in Mg(2+) binding. Positions 114 and 116 each coordinate Mn(2+). Residue E116 is part of the active site.

The protein belongs to the IPP isomerase type 1 family. As to quaternary structure, homodimer. Mg(2+) is required as a cofactor. The cofactor is Mn(2+).

It is found in the cytoplasm. The enzyme catalyses isopentenyl diphosphate = dimethylallyl diphosphate. Its pathway is isoprenoid biosynthesis; dimethylallyl diphosphate biosynthesis; dimethylallyl diphosphate from isopentenyl diphosphate: step 1/1. Catalyzes the 1,3-allylic rearrangement of the homoallylic substrate isopentenyl (IPP) to its highly electrophilic allylic isomer, dimethylallyl diphosphate (DMAPP). The protein is Isopentenyl-diphosphate Delta-isomerase of Escherichia coli O9:H4 (strain HS).